The primary structure comprises 727 residues: Elongation factor 2 (727 aa).

The region spanning 19–260 is the tr-type G domain; the sequence is DQIRNMGICA…MAITHLPNPL (242 aa). GTP is bound by residues 28–35, 94–98, and 148–151; these read AHIDHGKT, DTPGH, and NKVD. Position 603 is a diphthamide (H603).

It belongs to the TRAFAC class translation factor GTPase superfamily. Classic translation factor GTPase family. EF-G/EF-2 subfamily.

The protein resides in the cytoplasm. Its function is as follows. Catalyzes the GTP-dependent ribosomal translocation step during translation elongation. During this step, the ribosome changes from the pre-translocational (PRE) to the post-translocational (POST) state as the newly formed A-site-bound peptidyl-tRNA and P-site-bound deacylated tRNA move to the P and E sites, respectively. Catalyzes the coordinated movement of the two tRNA molecules, the mRNA and conformational changes in the ribosome. This Methanococcus maripaludis (strain C6 / ATCC BAA-1332) protein is Elongation factor 2.